Here is a 132-residue protein sequence, read N- to C-terminus: NADH-quinone oxidoreductase subunit A (132 aa).

3 consecutive transmembrane segments (helical) span residues 7 to 27, 62 to 82, and 91 to 111; these read YWVL…MIGV, FYLI…LYAW, and WTGY…LAYL.

This sequence belongs to the complex I subunit 3 family. As to quaternary structure, NDH-1 is composed of 14 different subunits. Subunits NuoA, H, J, K, L, M, N constitute the membrane sector of the complex.

The protein localises to the cell inner membrane. It carries out the reaction a quinone + NADH + 5 H(+)(in) = a quinol + NAD(+) + 4 H(+)(out). Functionally, NDH-1 shuttles electrons from NADH, via FMN and iron-sulfur (Fe-S) centers, to quinones in the respiratory chain. The immediate electron acceptor for the enzyme in this species is believed to be ubiquinone. Couples the redox reaction to proton translocation (for every two electrons transferred, four hydrogen ions are translocated across the cytoplasmic membrane), and thus conserves the redox energy in a proton gradient. The polypeptide is NADH-quinone oxidoreductase subunit A (Acidiphilium cryptum (strain JF-5)).